The following is a 267-amino-acid chain: MKDFITEAWLRANHTLSEGAEIHLPADSRLTPSARELLESRHLRIKFIDEQGRLFVDDEQQQPQPVHGLTSSDEHPQACCELCRQPVAKKPDTLTHLSAEKMVAKSDPRLGFRAVLDSTIALAVWLQIELAEPWQPWLADIRSRLGNIMRADALGEPLGCQAIVGLSDEDLHRLSHQPLRYLDHDHLVPEASHGRDAALLNLLRTKVRETETVAAQVFITRSFEVLRPDILQALNRLSSTVYVMMILSVTKQPLTVKQIQQRLGETQ.

A divalent metal cation-binding residues include Cys80 and Cys83.

Belongs to the Cob(I)alamin adenosyltransferase family. EutT subfamily. Homodimer. The cofactor is a divalent metal cation.

Its subcellular location is the bacterial microcompartment. The catalysed reaction is 2 cob(II)alamin + reduced [electron-transfer flavoprotein] + 2 ATP + 2 H2O = 2 adenosylcob(III)alamin + oxidized [electron-transfer flavoprotein] + 2 phosphate + 2 diphosphate + 3 H(+). It catalyses the reaction 2 cob(II)inamide + reduced [electron-transfer flavoprotein] + 2 ATP + 2 H2O = 2 adenosylcob(III)inamide + oxidized [electron-transfer flavoprotein] + 2 phosphate + 2 diphosphate + 3 H(+). It participates in amine and polyamine degradation; ethanolamine degradation. Functionally, converts cyanocobalamin (CN-B12) to adenosylcobalamin (AdoCbl), the inducer of the eut operon. Is not active on cobinamide nor other intermediates in the adenosylcobalamin synthetic pathway. Allows full induction of the eut operon. The chain is Corrinoid adenosyltransferase EutT (eutT) from Escherichia coli O6:H1 (strain CFT073 / ATCC 700928 / UPEC).